The chain runs to 398 residues: Methionine import ATP-binding protein MetN 2 (398 aa).

The ABC transporter domain maps to 43 to 282; that stretch reads VSLEQVGKVF…PRHGATRALL (240 aa). 79–86 contributes to the ATP binding site; it reads GRSGAGKS.

Belongs to the ABC transporter superfamily. Methionine importer (TC 3.A.1.24) family. As to quaternary structure, the complex is composed of two ATP-binding proteins (MetN), two transmembrane proteins (MetI) and a solute-binding protein (MetQ).

It is found in the cell inner membrane. It carries out the reaction L-methionine(out) + ATP + H2O = L-methionine(in) + ADP + phosphate + H(+). It catalyses the reaction D-methionine(out) + ATP + H2O = D-methionine(in) + ADP + phosphate + H(+). Functionally, part of the ABC transporter complex MetNIQ involved in methionine import. Responsible for energy coupling to the transport system. This Burkholderia lata (strain ATCC 17760 / DSM 23089 / LMG 22485 / NCIMB 9086 / R18194 / 383) protein is Methionine import ATP-binding protein MetN 2.